Reading from the N-terminus, the 432-residue chain is Adenylosuccinate synthetase (432 aa).

GTP-binding positions include Gly13–Lys19 and Gly41–Thr43. Asp14 acts as the Proton acceptor in catalysis. Residues Asp14 and Gly41 each contribute to the Mg(2+) site. Residues Asp14 to Lys17, Asn39 to His42, Thr131, Arg145, Gln226, Thr241, and Arg305 contribute to the IMP site. The Proton donor role is filled by His42. Ser301–Arg307 serves as a coordination point for substrate. GTP contacts are provided by residues Arg307, Lys333–Asp335, and Ser416–Gly418.

This sequence belongs to the adenylosuccinate synthetase family. As to quaternary structure, homodimer. Mg(2+) is required as a cofactor.

The protein localises to the cytoplasm. The catalysed reaction is IMP + L-aspartate + GTP = N(6)-(1,2-dicarboxyethyl)-AMP + GDP + phosphate + 2 H(+). It functions in the pathway purine metabolism; AMP biosynthesis via de novo pathway; AMP from IMP: step 1/2. Its function is as follows. Plays an important role in the de novo pathway of purine nucleotide biosynthesis. Catalyzes the first committed step in the biosynthesis of AMP from IMP. The chain is Adenylosuccinate synthetase from Neisseria meningitidis serogroup C (strain 053442).